The sequence spans 420 residues: UDP-N-acetylglucosamine 1-carboxyvinyltransferase (420 aa).

22–23 (KN) contributes to the phosphoenolpyruvate binding site. R91 contributes to the UDP-N-acetyl-alpha-D-glucosamine binding site. Catalysis depends on C115, which acts as the Proton donor. Residue C115 is modified to 2-(S-cysteinyl)pyruvic acid O-phosphothioketal. UDP-N-acetyl-alpha-D-glucosamine is bound by residues 120–124 (RPVDL), 160–163 (KVSV), D305, and I327.

The protein belongs to the EPSP synthase family. MurA subfamily.

It is found in the cytoplasm. It catalyses the reaction phosphoenolpyruvate + UDP-N-acetyl-alpha-D-glucosamine = UDP-N-acetyl-3-O-(1-carboxyvinyl)-alpha-D-glucosamine + phosphate. Its pathway is cell wall biogenesis; peptidoglycan biosynthesis. Cell wall formation. Adds enolpyruvyl to UDP-N-acetylglucosamine. The polypeptide is UDP-N-acetylglucosamine 1-carboxyvinyltransferase (Pectobacterium carotovorum subsp. carotovorum (strain PC1)).